The chain runs to 397 residues: Torsin-3A (397 aa).

The first 25 residues, 1-25 (MLRGPWRQLWLFFLLLLPGAPEPRG), serve as a signal peptide directing secretion. Residue Asn122 is glycosylated (N-linked (GlcNAc...) asparagine). 167–174 (GWSGTGKN) contributes to the ATP binding site.

Belongs to the ClpA/ClpB family. Torsin subfamily. In terms of assembly, may not form homohexamers. Post-translationally, N-glycosylated. Ubiquitously expressed. Highest expression in stomach, salivary glands and lymph nodes. Isoform 2 is expressed in placenta.

It is found in the cytoplasm. The protein resides in the endoplasmic reticulum lumen. This is Torsin-3A (TOR3A) from Homo sapiens (Human).